An 89-amino-acid chain; its full sequence is Small ribosomal subunit protein bS20 (89 aa).

Belongs to the bacterial ribosomal protein bS20 family.

Functionally, binds directly to 16S ribosomal RNA. In Solidesulfovibrio magneticus (strain ATCC 700980 / DSM 13731 / RS-1) (Desulfovibrio magneticus), this protein is Small ribosomal subunit protein bS20.